A 272-amino-acid chain; its full sequence is ATP synthase subunit a (272 aa).

6 helical membrane passes run 42 to 62 (IDSLFFSVLLCLLFLVIAGFV), 108 to 128 (FVWIILMNSMDLIPIDLLPCI), 140 to 162 (ILPSADINITCAMALNIFALMIF), 177 to 197 (LIYHPFNYSLCIPINFLLEII), 219 to 239 (LIFILIAGFLPWWSQWMLSVP), and 241 to 261 (AIFHILIIILQAFIFMVLTII).

It belongs to the ATPase A chain family. F-type ATPases have 2 components, CF(1) - the catalytic core - and CF(0) - the membrane proton channel. CF(1) has five subunits: alpha(3), beta(3), gamma(1), delta(1), epsilon(1). CF(0) has three main subunits: a(1), b(2) and c(9-12). The alpha and beta chains form an alternating ring which encloses part of the gamma chain. CF(1) is attached to CF(0) by a central stalk formed by the gamma and epsilon chains, while a peripheral stalk is formed by the delta and b chains.

Its subcellular location is the cell inner membrane. Its function is as follows. Key component of the proton channel; it plays a direct role in the translocation of protons across the membrane. In Blochmanniella floridana, this protein is ATP synthase subunit a.